The following is a 302-amino-acid chain: MKRGNEENNHKTSSSSSTQRLSRRKISAGEKSGNVNIPLDLTVEILKKLPAKSLLRFQCVSKQWLSIISSRRDFIDSIVTRSLTQPPPRDIKLIFHHQVLYPGPHFFIFSSTYPQNTDKESLTTRASSYHYVRGLICCWSHCPTTVDIYNPTTRQYYTVPDTNRYQYIETCFFGYDPVENQYKVMVLPKYYMEESPCQVFTVGDPIEKPWRDIQGIGVHFLLKDAVCINGVIYYQATNEYGSTYFLVSFDVRSEKFNHVKAPKILTDHPCTLINYQGKLGLIMCCKKGLEIWVMEDAEKKQD.

The segment covering 1 to 10 (MKRGNEENNH) has biased composition (basic and acidic residues). The tract at residues 1 to 27 (MKRGNEENNHKTSSSSSTQRLSRRKIS) is disordered. The region spanning 31–78 (KSGNVNIPLDLTVEILKKLPAKSLLRFQCVSKQWLSIISSRRDFIDSI) is the F-box domain.

The protein is Putative F-box protein At1g32420 of Arabidopsis thaliana (Mouse-ear cress).